The primary structure comprises 1774 residues: MESHLNPDGVPRPSYVFSADPIARPLEINFDGVKLDLSHEFSLVASNPAANSLGSKNYLQVCLRIRPFTQSEKEHEAEGCVQVLDSQSVLLKDPQSILGHLSEKSSGQVAQKFSFSKVFGPETSQKEFFLGCIMQPVKDLLEGHSRLIFTYGLTNSGKTYTFQGTEENIGILPRTLNVLFDSLQERLYTKMSFKPHRCREYLKLSSDQEKEESANKNTLLRQIKEVTIHNDSYDVLCGHLTNSLTIPEFEESVNSCDQSSLNVDNIKYSVWVSFFEIYNESIYDLFVPVSSKFQKRKMLRLSQDIKGYSFIKDLQWVQVSDSKEAYRLLKLGVKHQSVAFTKLNNASSRSHSIFTIRILQIEDSEIPRVTRVSELSLCDLAGSERSMKTQNEGERLREAGNINTSLLTLGKCINVLKNSEKSKVQHVPFRESKLTHYFQSFFTGKGKICMIINISQSCSAYDETLNVLKFSTTAQRVYVPDTLSSSQEKSFASNKSLQDVSLDSNLDNKILNVKRKTVSWENSLEDVLENEDLVEDLEENEETQNMETELTDEDSDKSLEECRVSTCHKKNKELLDLIEKLNKRLINENKEKLTLELKIREEVTQEFTQYWSQREADFKETLLHEREILEENAERRLAIFKDLVGKCDSQDEPTNRICDIELETEEAHNYVGVEDIFHSLQDDVTDIKKQAELAHLYITSLVDPQEAIACLQLKFNQVKAELAETKEELIKAQEELKNRESNSLVQALKTSSKVDTSLTSNKSTCNETSEMPKNSRAQTHSERKRLNEDGLQLGEPPAKKGLILVSPPITEEQNKMGEMQQSVSEVVEGNRVLKEKNEELKRLLTIGENELRNEKEEKAELNKQVVSLQQQLRFFEEKNSSLRADVEQIQASYNSAVAELQTQKAVNQEQRDRILKLSQEMETAARSIESNVSQIKQMQTKIDELRSLDSPSHISKIDLLNLQDLSSGAKGDNCLNTSQQLPGGDFSSTWVKEYHTQEISRENSFHASIEAIWEECKEIVKASSKKSHQIQGLEEQIEKLQVEVKGYREENSDLRAQESQGKNRDHQLKEKESLIQQLREELQEKSVSLRVQVQLVAEREQALSELSQDVTCYKAKIKDLEVIVETQKDECKRLVELEQSILEKESAILKLEANLKECEAKHQDHIRTNDLSAKEVKFREEVTRLANNLHDTKQLLQSKEEENEISRQETEKLKEELAANSILTQNLKADLQKKEEDCAELKEKFIDAKKQIEQVQREVSVMRDEEKLLRIKINELEKKKNQYSQDLDMKQRTIQQLKEQLSNQKMEEAVQQYEKVCKDLSVKEKLVEDMRLTLVEQEQTQAEQDRVLEAKSEEADWLATELDKWKEKFKDLETRSNQRLNTGTMDDLDVLTRKFSKLQDELQESEEKYKADRKKWLEEKAVLTTQAKEAENVRNREMRKYADDRERCLKLQNEVETLTAQLAEKNSELQKWREERDQLVTAVETQMKALLSSCKHKDEEIQELRKAAAKSTGTENQTMNPKPEYNDSVDLGGVETEPQSTSLEISRNTAEDGSVVLDSCEVSTENVQSTRFPKPELEIQFTPLQPNKMAVKHPGCPTPVTIKIPKARKRKSGEVEEDLVKCENKKNSTPRSNVKFPVSEHRNSPVKKEQKVSVGPSSKKTYSLRSQASTVSANIASKKREGTLQKFGDFLQHSPTILQSKAKKIIETMSSPKLSTVEVSKENVSQPKKAKRKLYRNEISSPINISGQVILMEQKVKETDHQILKRRLRTRTAK.

Positions 58–477 (YLQVCLRIRP…LKFSTTAQRV (420 aa)) constitute a Kinesin motor domain. Residue 152-159 (GLTNSGKT) coordinates ATP. At serine 486 the chain carries Phosphoserine. Coiled-coil stretches lie at residues 525 to 601 (EDVL…KIRE) and 705 to 747 (QEAI…LVQA). The segment covering 538-555 (EENEETQNMETELTDEDS) has biased composition (acidic residues). Disordered regions lie at residues 538–557 (EENE…DSDK) and 740–799 (ESNS…PPAK). Over residues 741–778 (SNSLVQALKTSSKVDTSLTSNKSTCNETSEMPKNSRAQ) the composition is skewed to polar residues. Residues 779–788 (THSERKRLNE) are compositionally biased toward basic and acidic residues. Residues 824-946 (SEVVEGNRVL…QMQTKIDELR (123 aa)) are a coiled coil. Position 950 is a phosphoserine (serine 950). A necessary and sufficient for interaction with SHTN1 region spans residues 1002 to 1059 (ENSFHASIEAIWEECKEIVKASSKKSHQIQGLEEQIEKLQVEVKGYREENSDLRAQES). Residues 1021–1507 (KASSKKSHQI…DEEIQELRKA (487 aa)) adopt a coiled-coil conformation. Serine 1107 and serine 1542 each carry phosphoserine. Residues 1514 to 1774 (TENQTMNPKP…KRRLRTRTAK (261 aa)) are interaction with PIN1. Phosphothreonine; by CDK1 is present on threonine 1598. Serine 1612 is modified (phosphoserine). The segment at 1625 to 1663 (KKNSTPRSNVKFPVSEHRNSPVKKEQKVSVGPSSKKTYS) is disordered. A compositionally biased stretch (basic and acidic residues) spans 1638–1651 (VSEHRNSPVKKEQK). A phosphoserine mark is found at serine 1669 and serine 1694.

Belongs to the TRAFAC class myosin-kinesin ATPase superfamily. Kinesin family. Oligomerizes (via kinesin motor domain). Associates with microtubules. Interacts (via C-terminal globular tail region) with PIN1 (via WW domain). Interacts with PRC1. Interacts with SHTN1 (via N-terminus); the interaction is direct and promotes the association of SHTN1 to microtubules in primary neurons. Associates with microtubules. Phosphorylated during mitosis by CDK1. Expressed in the brain (at protein level).

The protein resides in the nucleus. It is found in the cytoplasm. The protein localises to the cytoskeleton. It localises to the microtubule organizing center. Its subcellular location is the centrosome. The protein resides in the nucleolus. It is found in the nucleoplasm. The protein localises to the spindle. It localises to the spindle pole. Its subcellular location is the midbody. The protein resides in the cell projection. It is found in the axon. The protein localises to the growth cone. Plus-end-directed motor enzyme that is required for completion of cytokinesis. Required for proper midbody organization and abscission in polarized cortical stem cells. Plays a role in the regulation of neuronal polarization by mediating the transport of specific cargos. Participates in the mobilization of SHTN1 and in the accumulation of PIP3 in the growth cone of primary hippocampal neurons in a tubulin and actin-dependent manner. In the developing telencephalon, cooperates with SHTN1 to promote both the transition from the multipolar to the bipolar stage and the radial migration of cortical neurons from the ventricular zone toward the superficial layer of the neocortex. Involved in cerebral cortex growth. Acts as an oncogene for promoting bladder cancer cells proliferation, apoptosis inhibition and carcinogenic progression. The chain is Kinesin-like protein KIF20B from Mus musculus (Mouse).